The following is a 137-amino-acid chain: Photosystem II reaction center W protein, chloroplastic (137 aa).

The transit peptide at 1 to 64 (MATITASSSA…ETTTTTNKSM (64 aa)) directs the protein to the chloroplast. Residues 65-83 (GASLLAAAAAATISNPAMA) constitute a thylakoid transit peptide. Topologically, residues 84–103 (LVDERMSTEGTGLPFGLSNN) are lumenal, thylakoid. Residues 104-123 (LLGWILFGVFGLIWALYFVY) form a helical membrane-spanning segment. Topologically, residues 124-137 (ASGLEEDEESGLSL) are stromal.

As to quaternary structure, part of the photosystem II complex. PSII is composed of 1 copy each of membrane proteins PsbA, PsbB, PsbC, PsbD, numerous small proteins, at least 3 peripheral proteins of the oxygen-evolving complex and a large number of cofactors. It forms dimeric complexes.

The protein resides in the plastid. The protein localises to the chloroplast thylakoid membrane. Functionally, stabilizes dimeric photosystem II (PSII). In its absence no dimeric PSII accumulates and there is a reduction of monomeric PSII. The chain is Photosystem II reaction center W protein, chloroplastic from Spinacia oleracea (Spinach).